The following is a 371-amino-acid chain: Chorismate synthase (371 aa).

NADP(+) contacts are provided by arginine 48 and arginine 54. FMN is bound by residues arginine 125–serine 127, asparagine 238–alanine 239, glycine 278, lysine 293–serine 297, and arginine 319.

Belongs to the chorismate synthase family. Homotetramer. Requires FMNH2 as cofactor.

It carries out the reaction 5-O-(1-carboxyvinyl)-3-phosphoshikimate = chorismate + phosphate. Its pathway is metabolic intermediate biosynthesis; chorismate biosynthesis; chorismate from D-erythrose 4-phosphate and phosphoenolpyruvate: step 7/7. Catalyzes the anti-1,4-elimination of the C-3 phosphate and the C-6 proR hydrogen from 5-enolpyruvylshikimate-3-phosphate (EPSP) to yield chorismate, which is the branch point compound that serves as the starting substrate for the three terminal pathways of aromatic amino acid biosynthesis. This reaction introduces a second double bond into the aromatic ring system. This chain is Chorismate synthase, found in Saccharophagus degradans (strain 2-40 / ATCC 43961 / DSM 17024).